Consider the following 207-residue polypeptide: Large ribosomal subunit protein uL4 (207 aa).

Positions 49–73 (AKKRGEVSGGGKKPWKQKGGGRARA) are disordered.

Belongs to the universal ribosomal protein uL4 family. Part of the 50S ribosomal subunit.

One of the primary rRNA binding proteins, this protein initially binds near the 5'-end of the 23S rRNA. It is important during the early stages of 50S assembly. It makes multiple contacts with different domains of the 23S rRNA in the assembled 50S subunit and ribosome. Its function is as follows. Forms part of the polypeptide exit tunnel. This is Large ribosomal subunit protein uL4 from Helicobacter hepaticus (strain ATCC 51449 / 3B1).